The primary structure comprises 142 residues: NADH-quinone oxidoreductase subunit A (142 aa).

Transmembrane regions (helical) follow at residues Phe-8–Thr-28, Phe-63–Trp-83, and Phe-93–Trp-113.

The protein belongs to the complex I subunit 3 family. NDH-1 is composed of 14 different subunits. Subunits NuoA, H, J, K, L, M, N constitute the membrane sector of the complex.

The protein resides in the cell inner membrane. The catalysed reaction is a quinone + NADH + 5 H(+)(in) = a quinol + NAD(+) + 4 H(+)(out). In terms of biological role, NDH-1 shuttles electrons from NADH, via FMN and iron-sulfur (Fe-S) centers, to quinones in the respiratory chain. The immediate electron acceptor for the enzyme in this species is believed to be a menaquinone. Couples the redox reaction to proton translocation (for every two electrons transferred, four hydrogen ions are translocated across the cytoplasmic membrane), and thus conserves the redox energy in a proton gradient. The chain is NADH-quinone oxidoreductase subunit A from Chlorobium phaeobacteroides (strain BS1).